The sequence spans 214 residues: Large ribosomal subunit protein bL25 (214 aa).

Residues 187 to 214 (AEVAPSIEETVEPEVIKKGKKAEEEEEK) form a disordered region. Residues 200 to 214 (EVIKKGKKAEEEEEK) are compositionally biased toward basic and acidic residues.

Belongs to the bacterial ribosomal protein bL25 family. CTC subfamily. As to quaternary structure, part of the 50S ribosomal subunit; part of the 5S rRNA/L5/L18/L25 subcomplex. Contacts the 5S rRNA. Binds to the 5S rRNA independently of L5 and L18.

Its function is as follows. This is one of the proteins that binds to the 5S RNA in the ribosome where it forms part of the central protuberance. In Thermodesulfovibrio yellowstonii (strain ATCC 51303 / DSM 11347 / YP87), this protein is Large ribosomal subunit protein bL25.